The chain runs to 52 residues: Venom peptide 4b (52 aa).

Residues 1-23 (MRSAILLVIVAIVAILGFLGVNA) form the signal peptide. 3 AXPX repeats span residues 23–26 (AEPL), 31–34 (AEPN), and 39–42 (AAPL). The propeptide occupies 24-41 (EPLPSPLAEPNPHAKAAP). The interval 30–52 (LAEPNPHAKAAPLSPAAMASLAG) is disordered. A compositionally biased stretch (low complexity) spans 37 to 52 (AKAAPLSPAAMASLAG). A51 carries the post-translational modification Alanine amide.

As to expression, expressed by the venom gland.

The protein resides in the secreted. The chain is Venom peptide 4b from Eumenes pomiformis (Potter wasp).